A 382-amino-acid chain; its full sequence is Pentraxin-related protein PTX3 (382 aa).

Positions 1–17 (MHISVILFCALWSAVSA) are cleaved as a signal peptide. A coiled-coil region spans residues 79 to 137 (VMLRGELQKLQAELGRLEGSLQKLCGPEAPSETRLARALDDLLQASRDAGRRLARLEDA). Intrachain disulfides connect Cys180–Cys358 and Cys211–Cys272. In terms of domain architecture, Pentraxin (PTX) spans 180–382 (CETAILFPMR…QPHGGAQYVY (203 aa)). Asn221 carries an N-linked (GlcNAc...) asparagine glycan.

As to quaternary structure, homooctamer; disulfide-linked. Binds to C1q.

The protein resides in the secreted. Functionally, plays a role in the regulation of innate resistance to pathogens, inflammatory reactions, possibly clearance of self-components and female fertility. The sequence is that of Pentraxin-related protein PTX3 (PTX3) from Bos taurus (Bovine).